A 246-amino-acid polypeptide reads, in one-letter code: tRNA1(Val) (adenine(37)-N6)-methyltransferase (246 aa).

The protein belongs to the methyltransferase superfamily. tRNA (adenine-N(6)-)-methyltransferase family.

Its subcellular location is the cytoplasm. It catalyses the reaction adenosine(37) in tRNA1(Val) + S-adenosyl-L-methionine = N(6)-methyladenosine(37) in tRNA1(Val) + S-adenosyl-L-homocysteine + H(+). Functionally, specifically methylates the adenine in position 37 of tRNA(1)(Val) (anticodon cmo5UAC). The sequence is that of tRNA1(Val) (adenine(37)-N6)-methyltransferase from Shewanella halifaxensis (strain HAW-EB4).